We begin with the raw amino-acid sequence, 236 residues long: Sensory rhodopsin I (236 aa).

7 helical membrane passes run 6–26 (VVYGITAAGFAVGVAIVGFLY), 37–57 (ILAALALIPGVAGISYVAMVF), 74–94 (YLDWVVTTPLLVGFIGYTAGA), 98–118 (AIFGVMAADALMILAGVGAVV), 126–146 (ALFGVSAVFHISLFAYLYLIF), 167–187 (VGLLWIAYPLVWLAGPEGLGF), and 192–212 (GVSITYAFLDLLAKVPYVYFF). Lysine 205 is subject to N6-(retinylidene)lysine.

This sequence belongs to the archaeal/bacterial/fungal opsin family. Interacts with Htr1. Post-translationally, the covalent binding of retinal to the apoprotein, bacterioopsin, generates bacteriorhodopsin.

The protein resides in the membrane. Its function is as follows. Photoattractant rhodopsin. This chain is Sensory rhodopsin I (sop1), found in Haloarcula marismortui (strain ATCC 43049 / DSM 3752 / JCM 8966 / VKM B-1809) (Halobacterium marismortui).